We begin with the raw amino-acid sequence, 294 residues long: StAR-related lipid transfer protein 3 (294 aa).

The MENTAL domain occupies aspartate 1–serine 66. Positions glutamine 55–glutamate 61 match the FFAT motif. The tract at residues serine 58–arginine 77 is disordered. Positions alanine 79–serine 292 constitute an START domain.

Belongs to the STARD3 family. As to quaternary structure, homodimer. Post-translationally, phosphorylated. Phosphorylation allows the tethering of two membranes that participates in the formation of ER-endosome contacts. Phosphorylation of FFAT motif drives membrane tethering between the endoplasmic reticulum and late endosomes that in turn allows the efficient transport of sterol mediated by the START domain.

Its subcellular location is the late endosome membrane. It carries out the reaction cholesterol(in) = cholesterol(out). Sterol-binding protein that mediates cholesterol transport from the endoplasmic reticulum to endosomes. The sterol transport mechanism is triggered by phosphorylation of FFAT motif that leads to membrane tethering between the endoplasmic reticulum and late endosomes. Acts as a lipid transfer protein that redirects sterol to the endosome at the expense of the cell membrane and favors membrane formation inside endosomes. This is StAR-related lipid transfer protein 3 from Salvelinus fontinalis (Brook trout).